A 580-amino-acid chain; its full sequence is Rap guanine nucleotide exchange factor 5 (580 aa).

An N-terminal Ras-GEF domain is found at 67–200 (DRYVVVSGTP…ELKEFQKILG (134 aa)). The Ras-GEF domain occupies 344–579 (NTWDLALELM…FELSHRLEPR (236 aa)).

In the embryo, expressed in young neurons of the developing telencephalon, diencephalon and hindbrain. Not expressed in progenitor cells in the ventricular zone.

Its subcellular location is the nucleus. Its function is as follows. Guanine nucleotide exchange factor (GEF) for RAP1A, RAP2A and MRAS/M-Ras-GTP. Its association with MRAS inhibits Rap1 activation. This Rattus norvegicus (Rat) protein is Rap guanine nucleotide exchange factor 5 (Rapgef5).